The sequence spans 70 residues: Small ribosomal subunit protein bS18c (70 aa).

The protein belongs to the bacterial ribosomal protein bS18 family. In terms of assembly, part of the 30S ribosomal subunit.

It is found in the plastid. Its subcellular location is the chloroplast. This is Small ribosomal subunit protein bS18c from Gracilaria tenuistipitata var. liui (Red alga).